We begin with the raw amino-acid sequence, 197 residues long: Chitin synthase 3 (197 aa).

This sequence belongs to the chitin synthase family. Class III subfamily.

The protein localises to the cell membrane. It carries out the reaction [(1-&gt;4)-N-acetyl-beta-D-glucosaminyl](n) + UDP-N-acetyl-alpha-D-glucosamine = [(1-&gt;4)-N-acetyl-beta-D-glucosaminyl](n+1) + UDP + H(+). Functionally, polymerizes chitin, a structural polymer of the cell wall and septum, by transferring the sugar moiety of UDP-GlcNAc to the non-reducing end of the growing chitin polymer. The sequence is that of Chitin synthase 3 (CHS3) from Exophiala jeanselmei (Dematiaceous fungus).